A 24-amino-acid chain; its full sequence is Waglerin-4 (24 aa).

Cysteine 11 and cysteine 15 are disulfide-bonded.

Belongs to the waglerin family. As to quaternary structure, monomer. Expressed by the venom gland.

The protein resides in the secreted. Its function is as follows. Waglerin-2 selectively blocks the epsilon subunit of muscle nicotinic acetylcholine receptor (nAChR). Also has effects on rodent ionotropic GABA(A) receptors (GABR), since it potentiates I(GABA) in some neurons and depresses I(GABA) in others. In mice, it elicits tachypnea, ocular proptosis, rapid collapse and spasms, whereas no toxic effects on respiration and blood pressure are observed in rats. Functionally, waglerin-4 selectively blocks the epsilon subunit of muscle nicotinic acetylcholine receptor. It elicits tachypnea, ocular proptosis, rapid collapse and spasms in mice. It causes death by respiratory failure. The polypeptide is Waglerin-4 (Tropidolaemus wagleri (Wagler's pit viper)).